The sequence spans 82 residues: Large ribosomal subunit protein bL31 (82 aa).

The Zn(2+) site is built by Cys16, Cys18, Cys37, and Cys40.

The protein belongs to the bacterial ribosomal protein bL31 family. Type A subfamily. As to quaternary structure, part of the 50S ribosomal subunit. It depends on Zn(2+) as a cofactor.

Functionally, binds the 23S rRNA. The sequence is that of Large ribosomal subunit protein bL31 from Blochmanniella pennsylvanica (strain BPEN).